A 258-amino-acid chain; its full sequence is Small ribosomal subunit protein uS2 (258 aa).

Belongs to the universal ribosomal protein uS2 family.

In Leuconostoc citreum (strain KM20), this protein is Small ribosomal subunit protein uS2.